Reading from the N-terminus, the 406-residue chain is Glucose-6-phosphate isomerase (406 aa).

Glutamate 259 serves as the catalytic Proton donor. Catalysis depends on residues histidine 284 and lysine 397.

The protein belongs to the GPI family.

Its subcellular location is the cytoplasm. The catalysed reaction is alpha-D-glucose 6-phosphate = beta-D-fructose 6-phosphate. It functions in the pathway carbohydrate biosynthesis; gluconeogenesis. Its pathway is carbohydrate degradation; glycolysis; D-glyceraldehyde 3-phosphate and glycerone phosphate from D-glucose: step 2/4. Catalyzes the reversible isomerization of glucose-6-phosphate to fructose-6-phosphate. In Campylobacter jejuni subsp. jejuni serotype O:2 (strain ATCC 700819 / NCTC 11168), this protein is Glucose-6-phosphate isomerase.